Here is a 492-residue protein sequence, read N- to C-terminus: Putative BTB/POZ domain and WD-repeat protein R786 (492 aa).

The 71-residue stretch at 16 to 86 folds into the BTB domain; it reads TDVEIVLIDE…FYGQIVDSTN (71 aa). 2 WD repeats span residues 241–281 and 286–325; these read QSSC…IKIK and LINR…SKGI.

Belongs to the mimivirus BTB/WD family.

This is Putative BTB/POZ domain and WD-repeat protein R786 from Acanthamoeba polyphaga (Amoeba).